Consider the following 415-residue polypeptide: Serine hydroxymethyltransferase 1 (415 aa).

Residues Leu122 and 126-128 (GHL) contribute to the (6S)-5,6,7,8-tetrahydrofolate site. The residue at position 230 (Lys230) is an N6-(pyridoxal phosphate)lysine.

Belongs to the SHMT family. As to quaternary structure, homodimer. Pyridoxal 5'-phosphate is required as a cofactor.

The protein localises to the cytoplasm. It carries out the reaction (6R)-5,10-methylene-5,6,7,8-tetrahydrofolate + glycine + H2O = (6S)-5,6,7,8-tetrahydrofolate + L-serine. It participates in one-carbon metabolism; tetrahydrofolate interconversion. It functions in the pathway amino-acid biosynthesis; glycine biosynthesis; glycine from L-serine: step 1/1. Functionally, catalyzes the reversible interconversion of serine and glycine with tetrahydrofolate (THF) serving as the one-carbon carrier. This reaction serves as the major source of one-carbon groups required for the biosynthesis of purines, thymidylate, methionine, and other important biomolecules. Also exhibits THF-independent aldolase activity toward beta-hydroxyamino acids, producing glycine and aldehydes, via a retro-aldol mechanism. In Burkholderia thailandensis (strain ATCC 700388 / DSM 13276 / CCUG 48851 / CIP 106301 / E264), this protein is Serine hydroxymethyltransferase 1.